The following is a 34-amino-acid chain: MLKMSGWQRQSQNNSRNLRRECSRRKCIFIHHHT.

In terms of assembly, interacts with DDIT3 (isoform 1).

The protein resides in the nucleus. Its subcellular location is the cytoplasm. Functionally, product of the upstream open reading frame (uORF) of DDIT3/CHOP that is specifically produced in absence of stress, thereby preventing translation of downstream stress effector DDIT3/CHOP. In Mus musculus (Mouse), this protein is DDIT3 upstream open reading frame protein.